A 324-amino-acid chain; its full sequence is Phospho-N-acetylmuramoyl-pentapeptide-transferase (324 aa).

9 helical membrane-spanning segments follow: residues 5 to 25 (VILFTIIMGFLISVLLSPIFI), 51 to 71 (TPTMGGIMIIFSITITTIVMI), 77 to 97 (ISPEMFLLLFVTLGYGLLGFL), 117 to 137 (LIGQIVIAVIFYAVFHYYQFA), 147 to 167 (VSFDLGWAYFILVVFMLVGGS), 176 to 196 (LDGLLSGTAAIAFGAFAILAW), 203 to 223 (VAIFSVAVAGAVLGFLVFNAH), 227 to 248 (VFMGDTGSLALGGAIVAIAILT), and 302 to 322 (VVVTFWTAGLLLAVLGIYIEV).

It belongs to the glycosyltransferase 4 family. MraY subfamily. Requires Mg(2+) as cofactor.

It is found in the cell membrane. It catalyses the reaction UDP-N-acetyl-alpha-D-muramoyl-L-alanyl-gamma-D-glutamyl-meso-2,6-diaminopimeloyl-D-alanyl-D-alanine + di-trans,octa-cis-undecaprenyl phosphate = di-trans,octa-cis-undecaprenyl diphospho-N-acetyl-alpha-D-muramoyl-L-alanyl-D-glutamyl-meso-2,6-diaminopimeloyl-D-alanyl-D-alanine + UMP. It functions in the pathway cell wall biogenesis; peptidoglycan biosynthesis. Its function is as follows. Catalyzes the initial step of the lipid cycle reactions in the biosynthesis of the cell wall peptidoglycan: transfers peptidoglycan precursor phospho-MurNAc-pentapeptide from UDP-MurNAc-pentapeptide onto the lipid carrier undecaprenyl phosphate, yielding undecaprenyl-pyrophosphoryl-MurNAc-pentapeptide, known as lipid I. The polypeptide is Phospho-N-acetylmuramoyl-pentapeptide-transferase (Bacillus pumilus (strain SAFR-032)).